The sequence spans 549 residues: MAELTISANDIQSAIEEYVGSFTSDTSREEVGTVVDAGDGIAHVEGLPSVMTQELLEFPGGVLGVALNLDEHSVGAVILGNFENIEEGQQVKRTGEVLSVPVGDAFLGRVINPLGQPIDGRGDIEAETRRALELQAPSVVQRQSVKEPLQTGIKAIDAMTPIGRGQRQLIIGDRKTGKTAVCVDTILNQRQNWETGDPKKQVRCVYVAVGQKGTTIASVRRALEEGGAMDYTTIVAAPASDSAGFKWLAPYTGSAVAQHWMYDGKHVLIVFDDLTKQAEAYRAISLLLRRPPGREAYPGDVFYLHSRLLERCAKLSDELGGGSLTGLPIIETKANDISAYIPTNVISITDGQCFLETDLFNQGVRPAINVGVSVSRVGGAAQIKAMKEVAGSLRLDLSQYRELEAFAAFASDLDATSKAQLDRGARLVELLKQPQYQPMPVEEQVISIFLGTGGHLDSVPVEDVRRFETELLDHIRASEENLLSTIRDTQKLTEETEEALTKVINHFKKGFASSTGESVVPDEHVEAMDEEDLGKESVKVKKPAPQKKK.

172–179 (GDRKTGKT) is a binding site for ATP. The segment at 513–549 (SSTGESVVPDEHVEAMDEEDLGKESVKVKKPAPQKKK) is disordered. Over residues 540-549 (VKKPAPQKKK) the composition is skewed to basic residues.

This sequence belongs to the ATPase alpha/beta chains family. F-type ATPases have 2 components, CF(1) - the catalytic core - and CF(0) - the membrane proton channel. CF(1) has five subunits: alpha(3), beta(3), gamma(1), delta(1), epsilon(1). CF(0) has three main subunits: a(1), b(2) and c(9-12). The alpha and beta chains form an alternating ring which encloses part of the gamma chain. CF(1) is attached to CF(0) by a central stalk formed by the gamma and epsilon chains, while a peripheral stalk is formed by the delta and b chains.

It localises to the cell membrane. It catalyses the reaction ATP + H2O + 4 H(+)(in) = ADP + phosphate + 5 H(+)(out). In terms of biological role, produces ATP from ADP in the presence of a proton gradient across the membrane. The alpha chain is a regulatory subunit. The polypeptide is ATP synthase subunit alpha (Mycobacterium marinum (strain ATCC BAA-535 / M)).